Reading from the N-terminus, the 187-residue chain is MQTGLSLVCLVLLCSALGEAALRKTKKQAVVTDTGNSAKSDPEPVPIKTKGLKTLDRGWGEEIEWVQTYEEGLAKARENNKPLMVIHHLEDCPYSIALKKAFVADRLAQKLAREDFIMLNLVHPVADENQAPDGHYVPRVIFVDPSLTVRSDLKGRYGNKMYAYDADDIPELVTNMKKAKSYLKTEL.

The N-terminal stretch at 1-20 is a signal peptide; sequence MQTGLSLVCLVLLCSALGEA.

This sequence belongs to the AGR family.

The protein resides in the secreted. In terms of biological role, probably involved in cement gland formation. The protein is Anterior gradient protein 1 (ag1) of Xenopus tropicalis (Western clawed frog).